Here is a 301-residue protein sequence, read N- to C-terminus: Lipoyl synthase (301 aa).

7 residues coordinate [4Fe-4S] cluster: Cys53, Cys58, Cys64, Cys79, Cys83, Cys86, and Ser290. The region spanning 65-279 (WSRKTATYML…RIYGKSIGFK (215 aa)) is the Radical SAM core domain.

Belongs to the radical SAM superfamily. Lipoyl synthase family. [4Fe-4S] cluster is required as a cofactor.

The protein resides in the cytoplasm. It carries out the reaction [[Fe-S] cluster scaffold protein carrying a second [4Fe-4S](2+) cluster] + N(6)-octanoyl-L-lysyl-[protein] + 2 oxidized [2Fe-2S]-[ferredoxin] + 2 S-adenosyl-L-methionine + 4 H(+) = [[Fe-S] cluster scaffold protein] + N(6)-[(R)-dihydrolipoyl]-L-lysyl-[protein] + 4 Fe(3+) + 2 hydrogen sulfide + 2 5'-deoxyadenosine + 2 L-methionine + 2 reduced [2Fe-2S]-[ferredoxin]. It functions in the pathway protein modification; protein lipoylation via endogenous pathway; protein N(6)-(lipoyl)lysine from octanoyl-[acyl-carrier-protein]: step 2/2. Its function is as follows. Catalyzes the radical-mediated insertion of two sulfur atoms into the C-6 and C-8 positions of the octanoyl moiety bound to the lipoyl domains of lipoate-dependent enzymes, thereby converting the octanoylated domains into lipoylated derivatives. The sequence is that of Lipoyl synthase from Leptospira interrogans serogroup Icterohaemorrhagiae serovar Lai (strain 56601).